A 210-amino-acid polypeptide reads, in one-letter code: TM2 domain-containing protein C02F5.13 (210 aa).

The N-terminal stretch at 1-18 is a signal peptide; that stretch reads MRRLPWLIPFFLVNISNG. The Extracellular segment spans residues 19 to 138; that stretch reads NNEFRIEFEY…PRTFTKSTPC (120 aa). Asparagine 91 is a glycosylation site (N-linked (GlcNAc...) asparagine). A helical membrane pass occupies residues 139–159; the sequence is IIYNGHYFLTTLLYSIFLGVV. The TM2 domain maps to 143–191; the sequence is GHYFLTTLLYSIFLGVVAVDRFCLGYSAMAVGKLMTLGGFGIWWIVDIF. The Cytoplasmic segment spans residues 160–178; sequence AVDRFCLGYSAMAVGKLMT. A helical transmembrane segment spans residues 179 to 199; the sequence is LGGFGIWWIVDIFLLVLGVLG. Residues 200–210 are Extracellular-facing; it reads PADDSSWEPYY.

Belongs to the TM2 family.

It is found in the membrane. The chain is TM2 domain-containing protein C02F5.13 from Caenorhabditis elegans.